The chain runs to 272 residues: Acetylglutamate kinase (272 aa).

Residues 46 to 47 (GA), R68, and N166 contribute to the substrate site.

Belongs to the acetylglutamate kinase family. ArgB subfamily.

It localises to the cytoplasm. The catalysed reaction is N-acetyl-L-glutamate + ATP = N-acetyl-L-glutamyl 5-phosphate + ADP. It functions in the pathway amino-acid biosynthesis; L-arginine biosynthesis; N(2)-acetyl-L-ornithine from L-glutamate: step 2/4. Functionally, catalyzes the ATP-dependent phosphorylation of N-acetyl-L-glutamate. The sequence is that of Acetylglutamate kinase from Dehalococcoides mccartyi (strain ATCC BAA-2100 / JCM 16839 / KCTC 5957 / BAV1).